The sequence spans 116 residues: MVAAKKTKKSLESINSRLQLVMKSGKYVLGYKQSQKMIRQGKAKLVILANNCPALRKSEIEYYAMLSKTGVHHYSGNNIELGTACGKYYRVCTLAIIDPGDSDIIRSMPDQQQGEK.

This sequence belongs to the eukaryotic ribosomal protein eL30 family. Component of the large ribosomal subunit.

The protein resides in the cytoplasm. Component of the large ribosomal subunit. The ribosome is a large ribonucleoprotein complex responsible for the synthesis of proteins in the cell. This Ictalurus punctatus (Channel catfish) protein is Large ribosomal subunit protein eL30 (rpl30).